Reading from the N-terminus, the 254-residue chain is 3-oxo-5-alpha-steroid 4-dehydrogenase 2 (254 aa).

Transmembrane regions (helical) follow at residues Ser-8–Ala-28, Pro-72–Phe-92, Phe-146–Ile-166, and Leu-206–Leu-226.

The protein belongs to the steroid 5-alpha reductase family.

It is found in the microsome membrane. The protein localises to the endoplasmic reticulum membrane. It carries out the reaction a 3-oxo-5alpha-steroid + NADP(+) = a 3-oxo-Delta(4)-steroid + NADPH + H(+). The catalysed reaction is 17beta-hydroxy-5alpha-androstan-3-one + NADP(+) = testosterone + NADPH + H(+). The enzyme catalyses 5alpha-pregnane-3,20-dione + NADP(+) = progesterone + NADPH + H(+). Converts testosterone (T) into 5-alpha-dihydrotestosterone (DHT) and progesterone or corticosterone into their corresponding 5-alpha-3-oxosteroids. It plays a central role in sexual differentiation and androgen physiology. This is 3-oxo-5-alpha-steroid 4-dehydrogenase 2 (SRD5A2) from Sus scrofa (Pig).